Reading from the N-terminus, the 217-residue chain is Choline transport system permease protein OpuBB (217 aa).

The ABC transmembrane type-1 domain maps to 19–198; that stretch reads TYEHITISLI…ILAIVIDYVL (180 aa). 6 helical membrane-spanning segments follow: residues 23-43, 52-74, 84-101, 128-148, 150-170, and 180-200; these read ITIS…LGVV, GTII…AFFI, AIVA…RNTY, LVEL…STIY, IGWA…YIFI, and IIGG…VLAV.

This sequence belongs to the binding-protein-dependent transport system permease family. CysTW subfamily.

The protein localises to the cell membrane. Involved in a high affinity multicomponent binding-protein-dependent transport system for choline; probably responsible for the translocation of the substrate across the membrane. In Bacillus subtilis (strain 168), this protein is Choline transport system permease protein OpuBB (opuBB).